The sequence spans 153 residues: Large ribosomal subunit protein uL15 (153 aa).

Residues 1-42 are disordered; the sequence is MKLNTIKPGIGSAKPKRRVGRGIGSGLGKTCGRGHKGQKSRA. The span at 21 to 31 shows a compositional bias: gly residues; sequence RGIGSGLGKTC.

This sequence belongs to the universal ribosomal protein uL15 family. Part of the 50S ribosomal subunit.

Its function is as follows. Binds to the 23S rRNA. In Nitrosomonas europaea (strain ATCC 19718 / CIP 103999 / KCTC 2705 / NBRC 14298), this protein is Large ribosomal subunit protein uL15.